The chain runs to 508 residues: Photosystem II CP47 reaction center protein (508 aa).

The next 6 membrane-spanning stretches (helical) occupy residues Ala-21 to Ser-36, Ile-101 to Trp-115, Gly-140 to Phe-156, Ile-203 to Thr-218, Val-237 to Val-252, and Ser-457 to Arg-472.

The protein belongs to the PsbB/PsbC family. PsbB subfamily. As to quaternary structure, PSII is composed of 1 copy each of membrane proteins PsbA, PsbB, PsbC, PsbD, PsbE, PsbF, PsbH, PsbI, PsbJ, PsbK, PsbL, PsbM, PsbT, PsbX, PsbY, PsbZ, Psb30/Ycf12, peripheral proteins PsbO, CyanoQ (PsbQ), PsbU, PsbV and a large number of cofactors. It forms dimeric complexes. Binds multiple chlorophylls. PSII binds additional chlorophylls, carotenoids and specific lipids. serves as cofactor.

The protein resides in the cellular thylakoid membrane. Its function is as follows. One of the components of the core complex of photosystem II (PSII). It binds chlorophyll and helps catalyze the primary light-induced photochemical processes of PSII. PSII is a light-driven water:plastoquinone oxidoreductase, using light energy to abstract electrons from H(2)O, generating O(2) and a proton gradient subsequently used for ATP formation. The protein is Photosystem II CP47 reaction center protein of Synechococcus elongatus (strain ATCC 33912 / PCC 7942 / FACHB-805) (Anacystis nidulans R2).